Here is a 166-residue protein sequence, read N- to C-terminus: Regulatory protein RecX (166 aa).

Belongs to the RecX family.

Its subcellular location is the cytoplasm. Modulates RecA activity. The sequence is that of Regulatory protein RecX from Escherichia coli O139:H28 (strain E24377A / ETEC).